Consider the following 291-residue polypeptide: Pantothenate synthetase (291 aa).

ATP is bound at residue 33 to 40; the sequence is MGALHEGH. Residue His-40 is the Proton donor of the active site. A (R)-pantoate-binding site is contributed by Gln-64. Position 64 (Gln-64) interacts with beta-alanine. Position 157–160 (157–160) interacts with ATP; sequence GEKD. Gln-163 provides a ligand contact to (R)-pantoate. Residues Val-186 and 194–197 each bind ATP; that span reads LSSR.

Belongs to the pantothenate synthetase family. In terms of assembly, homodimer.

It is found in the cytoplasm. It catalyses the reaction (R)-pantoate + beta-alanine + ATP = (R)-pantothenate + AMP + diphosphate + H(+). Its pathway is cofactor biosynthesis; (R)-pantothenate biosynthesis; (R)-pantothenate from (R)-pantoate and beta-alanine: step 1/1. Functionally, catalyzes the condensation of pantoate with beta-alanine in an ATP-dependent reaction via a pantoyl-adenylate intermediate. The protein is Pantothenate synthetase of Rubrobacter xylanophilus (strain DSM 9941 / JCM 11954 / NBRC 16129 / PRD-1).